The following is a 190-amino-acid chain: Somatotropin (190 aa).

Position 19 (histidine 19) interacts with Zn(2+). Cysteine 52 and cysteine 163 form a disulfide bridge. Serine 105 carries the post-translational modification Phosphoserine. Glutamate 172 lines the Zn(2+) pocket. A disulfide bond links cysteine 180 and cysteine 188.

This sequence belongs to the somatotropin/prolactin family.

Its subcellular location is the secreted. Its function is as follows. Plays an important role in growth control. Its major role in stimulating body growth is to stimulate the liver and other tissues to secrete IGF1. It stimulates both the differentiation and proliferation of myoblasts. It also stimulates amino acid uptake and protein synthesis in muscle and other tissues. The protein is Somatotropin (GH1) of Vulpes vulpes (Red fox).